A 144-amino-acid polypeptide reads, in one-letter code: Apidaecins type 22 (144 aa).

Positions 1–19 are cleaved as a signal peptide; that stretch reads MKNFALAILVVTFVVAVFG. Propeptides lie at residues 20-42, 63-70, 91-98, and 119-126; these read NTNLDPPTRPTRLRREAEPEAEP and EAEPEAEP. Residues 20–144 are disordered; it reads NTNLDPPTRP…PQPRPPHPRI (125 aa). Pro residues predominate over residues 134-144; it reads IPQPRPPHPRI.

It belongs to the apidaecin family.

The protein resides in the secreted. Its function is as follows. Apidaecins have bactericidal activity; predominantly against Gram-negative bacteria. They seem to interfere with cell propagation. The chain is Apidaecins type 22 from Apis mellifera (Honeybee).